A 515-amino-acid polypeptide reads, in one-letter code: Signal transduction histidine-protein kinase/phosphatase MprB (515 aa).

Residues 1-24 (MTLPPPPSRLKPPRNTSSLSLRWR) lie on the Cytoplasmic side of the membrane. A helical membrane pass occupies residues 25–45 (VMLLAMSMVAMVVVLMSVAVY). Residues 46-165 (AVVSRALYDD…TGQVLGRLGT (120 aa)) lie on the Extracellular side of the membrane. A helical membrane pass occupies residues 166–186 (VLLIVGGVGVAVAAIAGGMVA). An HAMP domain is found at 187 to 239 (RAGLRPVGRLTQAAERVARTDDLRPIPVFGSDELARLTEAFNMMLRALTESRE). The Cytoplasmic segment spans residues 187–515 (RAGLRPVGRL…GKSRSASKEL (329 aa)). Residues 247-467 (DAGHELRTPL…SFYVMLPGRP (221 aa)) enclose the Histidine kinase domain. A Phosphohistidine; by autocatalysis modification is found at histidine 250. Residues 468-515 (LTPGGNGTAPVPAAQFDPDMRSAGSRADRRVIKNTETNGKSRSASKEL) form a disordered region.

Requires Mg(2+) as cofactor. The cofactor is Mn(2+). Post-translationally, autophosphorylated.

The protein localises to the cell membrane. It catalyses the reaction ATP + protein L-histidine = ADP + protein N-phospho-L-histidine.. Its function is as follows. Member of the two-component regulatory system MprB/MprA which contributes to maintaining a balance among several systems involved in stress resistance and is required for establishment and maintenance of persistent infection in the host. In response to environmental signals MprB acts both as a membrane-associated protein kinase that undergoes autophosphorylation and subsequently transfers the phosphate to MprA, and a protein phosphatase that dephosphorylates phospho-MprA. The protein is Signal transduction histidine-protein kinase/phosphatase MprB (mprB) of Mycobacterium sp. (strain KMS).